Consider the following 381-residue polypeptide: Probable G-protein coupled receptor 34 (381 aa).

Residues 1 to 61 lie on the Extracellular side of the membrane; that stretch reads MRSHTITMTT…LLSTVLTTSY (61 aa). N-linked (GlcNAc...) asparagine glycosylation is found at Asn-28, Asn-36, and Asn-42. A helical transmembrane segment spans residues 62-82; sequence SVIFIVGLVGNIIALYVFLGI. At 83–88 the chain is on the cytoplasmic side; sequence HRKRNS. Residues 89 to 109 traverse the membrane as a helical segment; that stretch reads IQIYLLNVAIADLLLIFCLPF. At 110–128 the chain is on the extracellular side; the sequence is RIMYHINQNKWTLGVILCK. The cysteines at positions 127 and 204 are disulfide-linked. A helical transmembrane segment spans residues 129–149; sequence VVGTLFYMNMYISIILLGFIS. At 150–171 the chain is on the cytoplasmic side; that stretch reads LDRYIKINRSIQQRKAITTKQS. Residues 172-192 traverse the membrane as a helical segment; sequence IYVCCIVWMLALGGFLTMIIL. The Extracellular portion of the chain corresponds to 193–216; sequence TLKKGGHNSTMCFHYRDKHNAKGE. A glycan (N-linked (GlcNAc...) asparagine) is linked at Asn-200. A helical transmembrane segment spans residues 217–237; sequence AIFNFILVVMFWLIFLLIILS. Topologically, residues 238–269 are cytoplasmic; sequence YIKIGKNLLRISKRRSKFPNSGKYATTARNSF. The chain crosses the membrane as a helical span at residues 270-290; it reads IVLIIFTICFVPYHAFRFIYI. Residues 291–310 lie on the Extracellular side of the membrane; that stretch reads SSQLNVSSCYWKEIVHKTNE. Asn-295 carries an N-linked (GlcNAc...) asparagine glycan. The helical transmembrane segment at 311-331 threads the bilayer; it reads IMLVLSSFNSCLDPVMYFLMS. The Cytoplasmic segment spans residues 332–381; the sequence is SNIRKIMCQLLFRRFQGEPSRSESTSEFKPGYSLHDTSVAVKIQSSSKST.

Belongs to the G-protein coupled receptor 1 family.

Its subcellular location is the cell membrane. In terms of biological role, G-protein-coupled receptor of lysophosphatidylserine (LysoPS) that plays different roles in immune response. Acts a damage-sensing receptor that triggers tissue repair upon recognition of dying neutrophils. Mechanistically, apoptotic neutrophils release lysophosphatydilserine that are recognized by type 3 innate lymphoid cells (ILC3s) via GPR34, which activates downstream PI3K-AKT and RAS-ERK signaling pathways leading to STAT3 activation and IL-22 production. Plays an important role in microglial function, controlling morphology and phagocytosis. This Gorilla gorilla gorilla (Western lowland gorilla) protein is Probable G-protein coupled receptor 34 (GPR34).